The chain runs to 450 residues: Sorting nexin-4 (450 aa).

Residue Met1 is modified to N-acetylmethionine. The tract at residues 1 to 46 is disordered; sequence MEQAPPDPEKLLQPGPLEPLGGPGAVLEAAVGEENEGTREDGSGVD. The span at 11-20 shows a compositional bias: low complexity; it reads LLQPGPLEPL. Residues 61–187 form the PX domain; it reads SVSEAEKRTG…YSFLTQEGNW (127 aa). A 1,2-diacyl-sn-glycero-3-phospho-(1D-myo-inositol-3-phosphate) is bound by residues Arg106, Ser108, Lys132, and Arg154.

It belongs to the sorting nexin family. In terms of assembly, heterodimer; heterodimerizes with SNX7 or SNX30. Interacts with WWC1/KIBRA. Identified in a complex with WWC1/KIBRA and dynein components DYNLL1 and DYNC1I2. Interacts with BIN1.

Its subcellular location is the early endosome. It localises to the early endosome membrane. Its function is as follows. Involved in the regulation of endocytosis and in several stages of intracellular trafficking. Plays a role in recycling endocytosed transferrin receptor and prevent its degradation. Involved in autophagosome assembly by regulating trafficking and recycling of phospholipid scramblase ATG9A. The protein is Sorting nexin-4 of Mus musculus (Mouse).